The sequence spans 299 residues: Protease HtpX homolog (299 aa).

The next 2 membrane-spanning stretches (helical) occupy residues 14–34 and 39–59; these read WLLLLVFFLLLGLVGYGVGYL and GFGGLILALVIGFIYAVTMIF. Residue His-143 coordinates Zn(2+). Glu-144 is an active-site residue. His-147 contacts Zn(2+). A run of 2 helical transmembrane segments spans residues 153–173 and 198–218; these read IRISTIAVALASAITMLAVMA and IILLIISLIAIILAPLAATLV. Glu-227 lines the Zn(2+) pocket.

The protein belongs to the peptidase M48B family. Zn(2+) serves as cofactor.

It is found in the cell membrane. The protein is Protease HtpX homolog of Streptococcus thermophilus (strain ATCC BAA-491 / LMD-9).